Here is a 481-residue protein sequence, read N- to C-terminus: MFS transporter eqxG (481 aa).

Low complexity predominate over residues 1 to 13; that stretch reads MATTDPAIAAPDD. Residues 1-58 are disordered; sequence MATTDPAIAAPDDSQLEAGRENIRANVGDALEKPSSSTGTMVDEPTDPNVVDWDGPHD. The N-linked (GlcNAc...) asparagine glycan is linked to asparagine 64. A helical membrane pass occupies residues 72–92; that stretch reads LHLVIVSLFTLAANLAATMFA. Asparagine 106 is a glycosylation site (N-linked (GlcNAc...) asparagine). Transmembrane regions (helical) follow at residues 111 to 131, 146 to 166, 169 to 189, 201 to 221, 276 to 296, 315 to 335, 353 to 373, 380 to 400, 403 to 423, and 439 to 459; these read AMTVSLYVLGFALGPLLLAPL, FVYVVFTIGCAFSTNVAMFLV, IICGCAASGPMSIGGGTVADL, LFTVGPLLGPSGLIGVATVIF, PIVLLISLYTGILFGLIFLLF, GLAYLGLGIGMILGLVLFSVL, LILMKWLGPITPLGLFIYGWT, WIVPIIGTFVVGFGSLFVVIP, IYLVDAFGAEAAASAMAANLL, and LYVSLGLGWGNSVLGFICLLF.

This sequence belongs to the major facilitator superfamily.

It localises to the cell membrane. Functionally, efflux pump that might be required for efficient secretion of equisetin or other secondary metabolies produced by the equisetin gene cluster. In Fusarium heterosporum, this protein is MFS transporter eqxG.